A 288-amino-acid chain; its full sequence is L-threonine kinase (288 aa).

80–90 (PIAKGMASSTA) lines the ATP pocket.

Belongs to the GHMP kinase family. PduX subfamily.

It localises to the cytoplasm. The catalysed reaction is L-threonine + ATP = O-phospho-L-threonine + ADP + H(+). Its pathway is cofactor biosynthesis; adenosylcobalamin biosynthesis. The protein operates within polyol metabolism; 1,2-propanediol degradation. L-threonine kinase that catalyzes the conversion of L-threonine to L-threonine-O-3-phosphate. Involved in the de novo synthesis of adenosylcobalamin (coenzyme B12) and the assimilation of cobyric acid. Functionally, expression of a cosmid containing the full 21-gene pdu operon in E.coli allows E.coli to grow on 1,2-propanediol (1,2-PD) with the appearance of bacterial microcompartments (BMC) in its cytoplasm. Its function is as follows. The 1,2-PD-specific bacterial microcompartment (BMC) concentrates low levels of 1,2-PD catabolic enzymes, concentrates volatile reaction intermediates thus enhancing pathway flux and keeps the level of toxic, mutagenic propionaldehyde low. This gene probably benefits from its induction via the Pdu promoter, rather than a physical interaction with the BMC. This is L-threonine kinase from Citrobacter freundii.